The chain runs to 485 residues: REST corepressor 1 (485 aa).

2 disordered regions span residues 1-26 and 49-110; these read MPAM…ASAS and AAAS…VGPQ. Low complexity-rich tracts occupy residues 49-64 and 74-95; these read AAAS…AAAA and AAAA…SGSS. The tract at residues 78-257 is interaction with HDAC1; sequence PNGNSSSNSW…RHARKQKRER (180 aa). Residues 103–189 enclose the ELM2 domain; it reads GGMRVGPQYQ…KSLADLPNFT (87 aa). Lys-122 participates in a covalent cross-link: Glycyl lysine isopeptide (Lys-Gly) (interchain with G-Cter in SUMO2). Ser-127 is subject to Phosphoserine. One can recognise an SANT 1 domain in the interval 190–241; that stretch reads PFPDEWTVEDKVLFEQAFSFHGKTFHRIQQMLPDKSIASLVKFYYSWKKTRT. A coiled-coil region spans residues 244 to 273; sequence SVMDRHARKQKREREESEDELEEANGNNPI. Positions 244–314 are disordered; that stretch reads SVMDRHARKQ…AKNRAKRKPP (71 aa). Ser-260 is modified (phosphoserine). The span at 278–288 shows a compositional bias: basic and acidic residues; it reads DQNKESKKEVP. Positions 296–384 are interaction with KDM1A; that stretch reads VKKEKHSTQA…LPEVIQKCNA (89 aa). A Glycyl lysine isopeptide (Lys-Gly) (interchain with G-Cter in SUMO2) cross-link involves residue Lys-297. The stretch at 334–369 forms a coiled coil; sequence ATTVLRQLDMELVSVKRQIQNIKQTNSALKEKLDGG. The region spanning 381–432 is the SANT 2 domain; sequence KCNARWTTEEQLLAVQAIRKYGRDFQAISDVIGNKSVVQVKNFFVNYRRRFN. Residues 442-485 are disordered; it reads AEHGKEETNGPSNQKPVKSPDNSIKMPEEEDEAPVLDVRYASAS. Residues 450-463 show a composition bias toward polar residues; it reads NGPSNQKPVKSPDN. Ser-460 carries the post-translational modification Phosphoserine. Residue Lys-466 forms a Glycyl lysine isopeptide (Lys-Gly) (interchain with G-Cter in SUMO2) linkage.

The protein belongs to the CoREST family. As to quaternary structure, interacts directly with GFI1 and GFI1B in a RCOR/GFI/KDM1A/HDAC complex. Interacts with INMS1. Component of a BHC histone deacetylase complex that contains HDAC1, HDAC2, HMG20B/BRAF35, KDM1A, RCOR1/CoREST and PHF21A/BHC80. The BHC complex may also contain ZMYM2, ZNF217, ZMYM3, GSE1 and GTF2I. Interacts with REST. Interacts with the SMARCE1/BAF57, suggesting that the BHC complex may recruit the ATP-dependent chromatin-remodeling SWI-SNF complex. Interacts with SOX2. (Microbial infection) Interacts with herpes virus HSV-1 ICP0 protein; the interaction leads to the disruption of the BHC complex, thereby preventing the BHC complex from repressing transcription of viral genes. Phosphorylated by HSV-1 protein kinases in case of infection. As to expression, ubiquitously expressed.

The protein resides in the nucleus. In terms of biological role, essential component of the BHC complex, a corepressor complex that represses transcription of neuron-specific genes in non-neuronal cells. The BHC complex is recruited at RE1/NRSE sites by REST and acts by deacetylating and demethylating specific sites on histones, thereby acting as a chromatin modifier. In the BHC complex, it serves as a molecular beacon for the recruitment of molecular machinery, including MeCP2 and SUV39H1, that imposes silencing across a chromosomal interval. Plays a central role in demethylation of Lys-4 of histone H3 by promoting demethylase activity of KDM1A on core histones and nucleosomal substrates. It also protects KDM1A from the proteasome. Component of a RCOR/GFI/KDM1A/HDAC complex that suppresses, via histone deacetylase (HDAC) recruitment, a number of genes implicated in multilineage blood cell development and controls hematopoietic differentiation. This Homo sapiens (Human) protein is REST corepressor 1 (RCOR1).